The primary structure comprises 380 residues: Kappa-type opioid receptor (380 aa).

The Extracellular segment spans residues 1 to 57 (MESPIQIFRGDPGPTCSPSACLLPNSSSWFPNWAESDSNGSVGSEDQQLESAHISPA). 2 N-linked (GlcNAc...) asparagine glycosylation sites follow: Asn25 and Asn39. Residues 58–85 (IPVIITAVYSVVFVVGLVGNSLVMFVII) form a helical membrane-spanning segment. Over 86–95 (RYTKMKTATN) the chain is Cytoplasmic. A helical transmembrane segment spans residues 96–119 (IYIFNLALADALVTTTMPFQSAVY). At 120 to 132 (LMNSWPFGDVLCK) the chain is on the extracellular side. An intrachain disulfide couples Cys131 to Cys210. A helical membrane pass occupies residues 133–154 (IVISIDYYNMFTSIFTLTMMSV). The Cytoplasmic segment spans residues 155 to 173 (DRYIAVCHPVKALDFRTPL). Residues 174–196 (KAKIINICIWLLASSVGISAIVL) traverse the membrane as a helical segment. Residues 197 to 222 (GGTKVREDVDVIECSLQFPDDEYSWW) are Extracellular-facing. Residues 223–247 (DLFMKICVFVFAFVIPVLIIIVCYT) traverse the membrane as a helical segment. The Cytoplasmic portion of the chain corresponds to 248-274 (LMILRLKSVRLLSGSREKDRNLRRITK). Residues 275-296 (LVLVVVAVFIICWTPIHIFILV) traverse the membrane as a helical segment. Residues 297–311 (EALGSTSHSTAALSS) are Extracellular-facing. The chain crosses the membrane as a helical span at residues 312–333 (YYFCIALGYTNSSLNPVLYAFL). Residues 334 to 380 (DENFKRCFRDFCFPIKMRMERQSTNRVRNTVQDPASMRDVGGMNKPV) lie on the Cytoplasmic side of the membrane. A lipid anchor (S-palmitoyl cysteine) is attached at Cys345.

This sequence belongs to the G-protein coupled receptor 1 family. As to quaternary structure, interacts with NHERF1. Interacts with GABARAPL1. As to expression, detected in brain (at protein level). Brain (neocortex, hippocampus, amygdala, medial habenula, hypothalamus, locus ceruleus, and parabrachial nucleus).

Its subcellular location is the cell membrane. Its function is as follows. G-protein coupled opioid receptor that functions as a receptor for endogenous alpha-neoendorphins and dynorphins, but has low affinity for beta-endorphins. Also functions as a receptor for various synthetic opioids and for the psychoactive diterpene salvinorin A. Ligand binding causes a conformation change that triggers signaling via guanine nucleotide-binding proteins (G proteins) and modulates the activity of down-stream effectors, such as adenylate cyclase. Signaling leads to the inhibition of adenylate cyclase activity. Inhibits neurotransmitter release by reducing calcium ion currents and increasing potassium ion conductance. Plays a role in the perception of pain. Plays a role in mediating reduced physical activity upon treatment with synthetic opioids. Plays a role in the regulation of salivation in response to synthetic opioids. May play a role in arousal and regulation of autonomic and neuroendocrine functions. This chain is Kappa-type opioid receptor (Oprk1), found in Mus musculus (Mouse).